Reading from the N-terminus, the 107-residue chain is uncharacterized protein (107 aa).

Positions 1-32 (MDSLASGRWRRRRTEELPAAGDAKRACRRSEP) are disordered. Over residues 22-31 (DAKRACRRSE) the composition is skewed to basic and acidic residues.

This is an uncharacterized protein from Mus musculus (Mouse).